The primary structure comprises 167 residues: Mitochondrial inner membrane protease subunit 1 (167 aa).

Residues Ser-40 and Lys-83 contribute to the active site.

This sequence belongs to the peptidase S26 family. IMP1 subfamily. Heterodimer of 2 subunits, IMMPL1 and IMMPL2.

The protein localises to the mitochondrion inner membrane. In terms of biological role, catalyzes the removal of transit peptides required for the targeting of proteins from the mitochondrial matrix, across the inner membrane, into the inter-membrane space. The chain is Mitochondrial inner membrane protease subunit 1 (immp1l) from Xenopus tropicalis (Western clawed frog).